A 493-amino-acid polypeptide reads, in one-letter code: Mitochondrial distribution and morphology protein 10 (493 aa).

The protein belongs to the MDM10 family. Component of the ER-mitochondria encounter structure (ERMES) or MDM complex, composed of MMM1, MDM10, MDM12 and MDM34. Associates with the mitochondrial outer membrane sorting assembly machinery SAM(core) complex, which consists of SAM35, SAM37 and SAM50, to form a SAM(holo) complex.

It is found in the mitochondrion outer membrane. Its function is as follows. Component of the ERMES/MDM complex, which serves as a molecular tether to connect the endoplasmic reticulum and mitochondria. Components of this complex are involved in the control of mitochondrial shape and protein biogenesis and may function in phospholipid exchange. MDM10 is involved in the late assembly steps of the general translocase of the mitochondrial outer membrane (TOM complex). Functions in the TOM40-specific route of the assembly of outer membrane beta-barrel proteins, including the association of TOM40 with the receptor TOM22 and small TOM proteins. Can associate with the SAM(core) complex as well as the MDM12-MMM1 complex, both involved in late steps of the major beta-barrel assembly pathway, that is responsible for biogenesis of all outer membrane beta-barrel proteins. May act as a switch that shuttles between both complexes and channels precursor proteins into the TOM40-specific pathway. Plays a role in mitochondrial morphology and in the inheritance of mitochondria. This chain is Mitochondrial distribution and morphology protein 10, found in Saccharomyces cerevisiae (strain RM11-1a) (Baker's yeast).